Consider the following 154-residue polypeptide: MGLSDGEWQLVLHVWGKVEADLAGHGQEVLIRLFKGHPETLEKFNKFKHIKSEDEMKASEDLKKHGVTVLTALGGVLKKKGHHEAEIKPLAQSHATKHKIPIKYLEFISEAIIHVLQSKHPGBFGADABGAMNKALELFRKDIAAKYKELGFQG.

One can recognise a Globin domain in the interval 2 to 148 (GLSDGEWQLV…FRKDIAAKYK (147 aa)). Ser4 carries the post-translational modification Phosphoserine. A nitrite-binding site is contributed by His65. His65 provides a ligand contact to O2. Thr68 carries the post-translational modification Phosphothreonine. His94 is a heme b binding site.

The protein belongs to the globin family. In terms of assembly, monomeric.

The protein localises to the cytoplasm. It localises to the sarcoplasm. It carries out the reaction Fe(III)-heme b-[protein] + nitric oxide + H2O = Fe(II)-heme b-[protein] + nitrite + 2 H(+). It catalyses the reaction H2O2 + AH2 = A + 2 H2O. Its function is as follows. Monomeric heme protein which primary function is to store oxygen and facilitate its diffusion within muscle tissues. Reversibly binds oxygen through a pentacoordinated heme iron and enables its timely and efficient release as needed during periods of heightened demand. Depending on the oxidative conditions of tissues and cells, and in addition to its ability to bind oxygen, it also has a nitrite reductase activity whereby it regulates the production of bioactive nitric oxide. Under stress conditions, like hypoxia and anoxia, it also protects cells against reactive oxygen species thanks to its pseudoperoxidase activity. This chain is Myoglobin (MB), found in Castor fiber (Eurasian beaver).